The following is a 47-amino-acid chain: U18-ctenitoxin-Pn1a (47 aa).

Disulfide bonds link Cys2–Cys16, Cys9–Cys22, Cys13–Cys46, Cys15–Cys34, and Cys24–Cys32.

As to expression, expressed by the venom gland.

Its subcellular location is the secreted. Neurotoxin. Causes spastic paralysis and death in mice by intracerebroventricular injection at dose levels of 3 ug per mouse. This chain is U18-ctenitoxin-Pn1a, found in Phoneutria nigriventer (Brazilian armed spider).